Here is a 213-residue protein sequence, read N- to C-terminus: Orotate phosphoribosyltransferase (213 aa).

K26 contributes to the 5-phospho-alpha-D-ribose 1-diphosphate binding site. Residue 34–35 (FF) coordinates orotate. 5-phospho-alpha-D-ribose 1-diphosphate contacts are provided by residues 72-73 (YK), R98, K99, K102, H104, and 123-131 (DDVISAGTS). Positions 127 and 155 each coordinate orotate.

It belongs to the purine/pyrimidine phosphoribosyltransferase family. PyrE subfamily. In terms of assembly, homodimer. It depends on Mg(2+) as a cofactor.

It catalyses the reaction orotidine 5'-phosphate + diphosphate = orotate + 5-phospho-alpha-D-ribose 1-diphosphate. It participates in pyrimidine metabolism; UMP biosynthesis via de novo pathway; UMP from orotate: step 1/2. Functionally, catalyzes the transfer of a ribosyl phosphate group from 5-phosphoribose 1-diphosphate to orotate, leading to the formation of orotidine monophosphate (OMP). The polypeptide is Orotate phosphoribosyltransferase (Neisseria meningitidis serogroup A / serotype 4A (strain DSM 15465 / Z2491)).